We begin with the raw amino-acid sequence, 297 residues long: Protein BCCIP homolog (297 aa).

The segment at 1–40 (MSANKQKKLSTMEVDPNEDVSSSSEDDDDDEPHPDAYKGN) is disordered.

It belongs to the BCP1 family.

This is Protein BCCIP homolog from Drosophila melanogaster (Fruit fly).